The sequence spans 351 residues: Biotin synthase (351 aa).

The Radical SAM core domain maps to 44–262 (NRVQVSTLLS…LAVARILMPQ (219 aa)). C59, C63, and C66 together coordinate [4Fe-4S] cluster. [2Fe-2S] cluster is bound by residues C103, C134, C194, and R266.

It belongs to the radical SAM superfamily. Biotin synthase family. Homodimer. [4Fe-4S] cluster is required as a cofactor. It depends on [2Fe-2S] cluster as a cofactor.

It catalyses the reaction (4R,5S)-dethiobiotin + (sulfur carrier)-SH + 2 reduced [2Fe-2S]-[ferredoxin] + 2 S-adenosyl-L-methionine = (sulfur carrier)-H + biotin + 2 5'-deoxyadenosine + 2 L-methionine + 2 oxidized [2Fe-2S]-[ferredoxin]. It functions in the pathway cofactor biosynthesis; biotin biosynthesis; biotin from 7,8-diaminononanoate: step 2/2. In terms of biological role, catalyzes the conversion of dethiobiotin (DTB) to biotin by the insertion of a sulfur atom into dethiobiotin via a radical-based mechanism. The sequence is that of Biotin synthase from Pseudomonas fluorescens (strain ATCC BAA-477 / NRRL B-23932 / Pf-5).